Reading from the N-terminus, the 603-residue chain is Proline--tRNA ligase (603 aa).

Belongs to the class-II aminoacyl-tRNA synthetase family. ProS type 1 subfamily. Homodimer.

The protein localises to the cytoplasm. It carries out the reaction tRNA(Pro) + L-proline + ATP = L-prolyl-tRNA(Pro) + AMP + diphosphate. In terms of biological role, catalyzes the attachment of proline to tRNA(Pro) in a two-step reaction: proline is first activated by ATP to form Pro-AMP and then transferred to the acceptor end of tRNA(Pro). As ProRS can inadvertently accommodate and process non-cognate amino acids such as alanine and cysteine, to avoid such errors it has two additional distinct editing activities against alanine. One activity is designated as 'pretransfer' editing and involves the tRNA(Pro)-independent hydrolysis of activated Ala-AMP. The other activity is designated 'posttransfer' editing and involves deacylation of mischarged Ala-tRNA(Pro). The misacylated Cys-tRNA(Pro) is not edited by ProRS. This is Proline--tRNA ligase from Arthrobacter sp. (strain FB24).